Reading from the N-terminus, the 604-residue chain is 2-isopropylmalate synthase 2, mitochondrial (604 aa).

A mitochondrion-targeting transit peptide spans 1–50 (MVKHSFIALAEHASKLRRSIPPVKLTYKNMLRDPSVKYRAFAPPKMVKRI). Positions 60–335 (PRWLSTDLRD…SPNLDFSDLT (276 aa)) constitute a Pyruvate carboxyltransferase domain. A divalent metal cation is bound by residues aspartate 69, histidine 274, histidine 276, and asparagine 310.

The protein belongs to the alpha-IPM synthase/homocitrate synthase family. LeuA type 2 subfamily. Homodimer. Requires a divalent metal cation as cofactor.

It is found in the mitochondrion. The enzyme catalyses 3-methyl-2-oxobutanoate + acetyl-CoA + H2O = (2S)-2-isopropylmalate + CoA + H(+). It functions in the pathway amino-acid biosynthesis; L-leucine biosynthesis; L-leucine from 3-methyl-2-oxobutanoate: step 1/4. Its function is as follows. Catalyzes the condensation of the acetyl group of acetyl-CoA with 3-methyl-2-oxobutanoate (2-oxoisovalerate) to form 3-carboxy-3-hydroxy-4-methylpentanoate (2-isopropylmalate). Redundant to LEU4, responsible for about 20% of alpha-IPMS activity. Involved in leucine synthesis. This chain is 2-isopropylmalate synthase 2, mitochondrial, found in Saccharomyces cerevisiae (strain ATCC 204508 / S288c) (Baker's yeast).